The following is a 177-amino-acid chain: Transcription termination/antitermination protein NusG (177 aa).

The 26-residue stretch at E125–R150 folds into the KOW domain.

It belongs to the NusG family.

Participates in transcription elongation, termination and antitermination. The polypeptide is Transcription termination/antitermination protein NusG (Campylobacter jejuni subsp. jejuni serotype O:2 (strain ATCC 700819 / NCTC 11168)).